Here is a 249-residue protein sequence, read N- to C-terminus: Metallo-beta-lactamase type 2 (249 aa).

A signal peptide spans 1–18; that stretch reads MKTVFILISMLFPVAVMA. Residues histidine 99, histidine 101, aspartate 103, histidine 162, and cysteine 181 each coordinate Zn(2+). Substrate is bound by residues lysine 184 and asparagine 193. Histidine 223 contacts Zn(2+).

It belongs to the metallo-beta-lactamase superfamily. Class-B beta-lactamase family. In terms of assembly, monomer. Requires Zn(2+) as cofactor.

The protein localises to the periplasm. The enzyme catalyses a beta-lactam + H2O = a substituted beta-amino acid. Competitively inhibited by 4-morpholineethanesulfonic acid (MES), SB236050 and biphenyl tetrazoles (BPTs). Also inhibited by chelating agents such as EDTA and 1,10-phenanthroline. CcrA is not susceptible to inactivation by the beta-lactamase-blocking agents clavulanic acid or tazobactam. Confers resistance to the different beta-lactams antibiotics (penicillin, cephalosporin and carbapenem) via the hydrolysis of the beta-lactam ring. This chain is Metallo-beta-lactamase type 2, found in Bacteroides fragilis.